Here is a 272-residue protein sequence, read N- to C-terminus: Cytosolic Fe-S cluster assembly factor NUBP2 (272 aa).

Residue 23–30 (GKGGVGKS) participates in ATP binding. Cys-197 and Cys-200 together coordinate [4Fe-4S] cluster.

Belongs to the Mrp/NBP35 ATP-binding proteins family. NUBP2/CFD1 subfamily. As to quaternary structure, heterotetramer of 2 NUBP1 and 2 NUBP2 chains. [4Fe-4S] cluster serves as cofactor.

It localises to the cytoplasm. In terms of biological role, component of the cytosolic iron-sulfur (Fe/S) protein assembly (CIA) machinery. Required for maturation of extramitochondrial Fe-S proteins. The NUBP1-NUBP2 heterotetramer forms a Fe-S scaffold complex, mediating the de novo assembly of an Fe-S cluster and its transfer to target apoproteins. The protein is Cytosolic Fe-S cluster assembly factor NUBP2 of Gallus gallus (Chicken).